Here is a 1594-residue protein sequence, read N- to C-terminus: MIRRLSVAFLSTYRGPQADAPGVTSTGPLAVAAHDDLVSDDLVAAHYRLASMRAPGETKAAVYPGDAGSGAALQIVTDQAPMLVDSVTVLLHRHGIAYTAIMNPVFRVRRGLDGELLDVRPAAEAAPGDGADECWILVPITAAADGEALTEATRLVPGILAEARQIGLDSGAMIAALHGLANDLATDLEGHFPNAERKEVAALLRWLADGHFVLLGYQQCVVGDGNAEVDPASRLGVLRLRNDVLPPLTDSDDLLVLAQATMPSYLRYGAYPYIVVVRESPGASRVIEHRFVGLFTVAAMNANALEIPLISRRVEEALAMAHRDPSHPGQLLRDIIQTIPRPELFALSSKQLLEMALAVVDLGSRRRTLLFLRADHLAHFVSCLVYLPRDRYTTAVRLEMQDILVRELGGAGIDYSARVSESPWAVVHFTVRLPEGTAADSVDTSLENESRIQDLLTEATRNWGDRMISAAAAASISPAALEHYAHAFPEDYKQAFAPQDAIADISLIEALQDDSVKLVLADTAEDRVWKLTWYLGGHSASLSELLPMLQSMGVVVLEERPFTLRRTDGLPVWIYQFKISPHPSIPHAPDAEAQRDTAQRFADAVTAIWHGRVEIDRFNELVMRAGLTWQQVVVLRAYAKYLRQAGFPYSQSHIESVLNENPHTTRSLIDLFEALFDPSQETDGRRDAQGAAAAVAADIDALVSLDTDRVLRAFANLIEATLRTNYFVARPDSARARNVLAFKLNPLVIKELPLPRPKFEIFVYSPRVEGVHLRFGFVARGGLRWSDRREDFRTEILGLVKAQAVKNAVIVPVGAKGGFVVKRPPTLTGDAAADREATRAEGVECYRLFISGLLDVTDNVDKATGAVVTPPEVVRRDGEDAYLVVAADKGTATFSDIANEVAKSYGFWLGDAFASGGSIGYDHKAMGITAKGAWESVKRHFREMGVDTQTQDFTVVGIGDMSGDVFGNGMLLSKHIRLVAAFDHRDIFLDPNPDAGRSWDERKRLFDLPRSSWADYDKSLISEGGGVYSRQQKSIPISPQVRTALGLDADVEELTPPALIKAILKAPVDLLWNGGIGTYIKAETEADADVGDRANDQIRVCGNQVRAKVIGEGGNLGVTALGRIEFDLAGGRINTDALDNSAGVDCSDHEVNIKILIDSAVTAGKVTPEERTELLLSMTDEVGELVLADNRDQNDLMGTSRANAASLLSVHARMIKDLVDNRGLNRELEALPSEKEIRRRADAGIGLTSPELATLMAHVKLALKDDVLASDLPDQEVFASRLPYYFPTRLREELHGEIRSHQLRREIITTMLVNDLVDTAGISYAYRITEDVGVGPVDAVRSYVAINAIFGIGDVWRRIRAAGDAGVPTSVTDRMTLDLRRLVDRAGRWLLNYRPQPLAVGAEINRFGAKVAALTPRMSEWLRGDDKAIVSKEAGDFASHGVPEDLAYHIATGLYQYSLLDVIDIADIVDREPDEVADTYFALMDHLGADALLTAVSRLSRDDRWHSLARLAIRDDIYGSLRALCFDVLAVGEPDENGEEKIAEWETTNSSRVTRARRTLTEIYKDGEQDLATLSVAARQIRSMTRTSGTGTTG.

Lys816 is an active-site residue.

Belongs to the Glu/Leu/Phe/Val dehydrogenases family. Interacts with (unphosphorylated) GarA.

The catalysed reaction is L-glutamate + NAD(+) + H2O = 2-oxoglutarate + NH4(+) + NADH + H(+). Activity is inhibited by unphosphorylated GarA. Stimulated by manganese and magnesium. Functionally, catalyzes the reversible conversion of L-glutamate to 2-oxoglutarate. Highly specific for NAD. The sequence is that of NAD-specific glutamate dehydrogenase (gdh) from Mycolicibacterium smegmatis (strain ATCC 700084 / mc(2)155) (Mycobacterium smegmatis).